The primary structure comprises 61 residues: Small ribosomal subunit protein uS14B (61 aa).

4 residues coordinate Zn(2+): C24, C27, C40, and C43.

Belongs to the universal ribosomal protein uS14 family. Zinc-binding uS14 subfamily. Part of the 30S ribosomal subunit. Contacts proteins S3 and S10. Zn(2+) is required as a cofactor.

Its function is as follows. Binds 16S rRNA, required for the assembly of 30S particles and may also be responsible for determining the conformation of the 16S rRNA at the A site. In Bacillus velezensis (strain DSM 23117 / BGSC 10A6 / LMG 26770 / FZB42) (Bacillus amyloliquefaciens subsp. plantarum), this protein is Small ribosomal subunit protein uS14B.